The sequence spans 300 residues: Acetyl-coenzyme A carboxylase carboxyl transferase subunit beta 2 (300 aa).

One can recognise a CoA carboxyltransferase N-terminal domain in the interval 26 to 294 (VWVKCPSCRE…SGAYSSEAVA (269 aa)). Zn(2+) contacts are provided by C30, C33, C49, and C51. The segment at 30–51 (CPSCRELIYHKQLAERMKVCRC) adopts a C4-type zinc-finger fold.

This sequence belongs to the AccD/PCCB family. Acetyl-CoA carboxylase is a heterohexamer composed of biotin carboxyl carrier protein (AccB), biotin carboxylase (AccC) and two subunits each of ACCase subunit alpha (AccA) and ACCase subunit beta (AccD). Requires Zn(2+) as cofactor.

Its subcellular location is the cytoplasm. The enzyme catalyses N(6)-carboxybiotinyl-L-lysyl-[protein] + acetyl-CoA = N(6)-biotinyl-L-lysyl-[protein] + malonyl-CoA. The protein operates within lipid metabolism; malonyl-CoA biosynthesis; malonyl-CoA from acetyl-CoA: step 1/1. Functionally, component of the acetyl coenzyme A carboxylase (ACC) complex. Biotin carboxylase (BC) catalyzes the carboxylation of biotin on its carrier protein (BCCP) and then the CO(2) group is transferred by the transcarboxylase to acetyl-CoA to form malonyl-CoA. This is Acetyl-coenzyme A carboxylase carboxyl transferase subunit beta 2 from Roseiflexus castenholzii (strain DSM 13941 / HLO8).